A 450-amino-acid chain; its full sequence is Phosphoglucosamine mutase (450 aa).

Ser-102 functions as the Phosphoserine intermediate in the catalytic mechanism. The Mg(2+) site is built by Ser-102, Asp-243, Asp-245, and Asp-247. Ser-102 is subject to Phosphoserine.

This sequence belongs to the phosphohexose mutase family. It depends on Mg(2+) as a cofactor. Post-translationally, activated by phosphorylation.

It carries out the reaction alpha-D-glucosamine 1-phosphate = D-glucosamine 6-phosphate. Its function is as follows. Catalyzes the conversion of glucosamine-6-phosphate to glucosamine-1-phosphate. This chain is Phosphoglucosamine mutase, found in Rhizobium rhizogenes (strain K84 / ATCC BAA-868) (Agrobacterium radiobacter).